The following is a 61-amino-acid chain: Metallothionein-1F (61 aa).

M1 is modified (N-acetylmethionine). The beta stretch occupies residues 1–29 (MDPNCSCAAGVSCTCAGSCKCKECKCTSC). A divalent metal cation is bound by residues C5, C7, C13, C15, C19, C21, C24, C26, C29, C33, C34, C36, C37, C41, C44, C48, C50, and C57. The interval 30–61 (KKSCCSCCPVGCSKCAQGCVCKGASEKCSCCD) is alpha. A Phosphoserine modification is found at S58. 2 residues coordinate a divalent metal cation: C59 and C60.

Belongs to the metallothionein superfamily. Type 1 family. As to quaternary structure, monomer.

Functionally, metallothioneins have a high content of cysteine residues that bind various heavy metals; these proteins are transcriptionally regulated by both heavy metals and glucocorticoids. This chain is Metallothionein-1F (MT1F), found in Homo sapiens (Human).